The following is a 141-amino-acid chain: Hemoglobin subunit alpha (141 aa).

A Globin domain is found at 1–141 (VLSSTDKSNV…VSTVLTSKYR (141 aa)). Serine 3 carries the phosphoserine modification. N6-succinyllysine is present on residues lysine 7 and lysine 11. An N6-acetyllysine; alternate modification is found at lysine 16. Residue lysine 16 is modified to N6-succinyllysine; alternate. Tyrosine 24 carries the phosphotyrosine modification. Position 35 is a phosphoserine (serine 35). The residue at position 40 (lysine 40) is an N6-succinyllysine. Position 58 (histidine 58) interacts with O2. Residue histidine 87 participates in heme b binding. Serine 102 carries the phosphoserine modification. Threonine 108 is subject to Phosphothreonine. A phosphoserine mark is found at serine 124 and serine 131. A phosphothreonine mark is found at threonine 134 and threonine 137. Serine 138 carries the post-translational modification Phosphoserine.

This sequence belongs to the globin family. As to quaternary structure, heterotetramer of two alpha chains and two beta chains. Red blood cells.

In terms of biological role, involved in oxygen transport from the lung to the various peripheral tissues. Hemopressin acts as an antagonist peptide of the cannabinoid receptor CNR1. Hemopressin-binding efficiently blocks cannabinoid receptor CNR1 and subsequent signaling. The polypeptide is Hemoglobin subunit alpha (Pteropus vampyrus (Large flying fox)).